Here is a 114-residue protein sequence, read N- to C-terminus: INGDAKGTVFFEQETSEAPVKVTGEVLGLTKGLHGFHVHEFGDNTNGCMSSGPHFNPRSKEHGAPTDENRHLGDLGNIQAAGDSPTAVSITDSKITLFGADSIIGRTVVVHADA.

His37, His39, and His54 together coordinate Cu cation. Residues 48–76 are disordered; the sequence is CMSSGPHFNPRSKEHGAPTDENRHLGDLG. Zn(2+)-binding residues include His54, His62, His71, and Asp74. The span at 58 to 73 shows a compositional bias: basic and acidic residues; that stretch reads RSKEHGAPTDENRHLG. His111 contributes to the Cu cation binding site.

Belongs to the Cu-Zn superoxide dismutase family. In terms of assembly, homodimer. It depends on Cu cation as a cofactor. Requires Zn(2+) as cofactor.

The protein localises to the cytoplasm. The enzyme catalyses 2 superoxide + 2 H(+) = H2O2 + O2. Its function is as follows. Destroys radicals which are normally produced within the cells and which are toxic to biological systems. The protein is Superoxide dismutase [Cu-Zn] of Drosophila obscura (Fruit fly).